Consider the following 177-residue polypeptide: Parathyroid hormone-related protein (177 aa).

The N-terminal stretch at 1 to 24 (MLRRLVQQWGVAVFLLSYSVPSCG) is a signal peptide. A propeptide spanning residues 25-34 (RSVEELGRRL) is cleaved from the precursor. Residues 57 to 68 (RFFLHHLIAEIH) form an important for receptor binding region. Residues 74 to 177 (ATSEVSPNSK…TSLELNLRRH (104 aa)) are disordered. The span at 76–90 (SEVSPNSKPAPNTKN) shows a compositional bias: polar residues. Residues 108–129 (TNKVETYKEQPLKTPGKKKKGK) carry the Nuclear localization signal motif. Positions 109-118 (NKVETYKEQP) are enriched in basic and acidic residues. Residues 122 to 132 (PGKKKKGKPGK) show a composition bias toward basic residues.

Belongs to the parathyroid hormone family. PTHrP interacts with PTH1R (via N-terminal extracellular domain). Post-translationally, there are several secretory forms, including osteostatin, arising from endoproteolytic cleavage of the initial translation product. Each of these secretory forms is believed to have one or more of its own receptors that mediates the normal paracrine, autocrine and endocrine actions.

The protein resides in the secreted. It is found in the cytoplasm. The protein localises to the nucleus. Its function is as follows. Neuroendocrine peptide which is a critical regulator of cellular and organ growth, development, migration, differentiation and survival and of epithelial calcium ion transport. Acts by binding to its receptor, PTH1R, activating G protein-coupled receptor signaling. Regulates endochondral bone development and epithelial-mesenchymal interactions during the formation of the mammary glands and teeth. Required for skeletal homeostasis. Promotes mammary mesenchyme differentiation and bud outgrowth by modulating mesenchymal cell responsiveness to BMPs. Up-regulates BMPR1A expression in the mammary mesenchyme and this increases the sensitivity of these cells to BMPs and allows them to respond to BMP4 in a paracrine and/or autocrine fashion. BMP4 signaling in the mesenchyme, in turn, triggers epithelial outgrowth and augments MSX2 expression, which causes the mammary mesenchyme to inhibit hair follicle formation within the nipple sheath. In terms of biological role, potent inhibitor of osteoclastic bone resorption. This is Parathyroid hormone-related protein (PTHLH) from Canis lupus familiaris (Dog).